The following is a 284-amino-acid chain: NAD kinase (284 aa).

Asp-70 acts as the Proton acceptor in catalysis. NAD(+) contacts are provided by residues 70-71 (DG), 139-140 (NE), Lys-167, Asp-169, Leu-177, 180-185 (TAYNLS), and Gln-236.

Belongs to the NAD kinase family. A divalent metal cation serves as cofactor.

It localises to the cytoplasm. It carries out the reaction NAD(+) + ATP = ADP + NADP(+) + H(+). Involved in the regulation of the intracellular balance of NAD and NADP, and is a key enzyme in the biosynthesis of NADP. Catalyzes specifically the phosphorylation on 2'-hydroxyl of the adenosine moiety of NAD to yield NADP. The protein is NAD kinase of Helicobacter pylori (strain G27).